The sequence spans 380 residues: Cytochrome b (380 aa).

4 consecutive transmembrane segments (helical) span residues 34 to 54 (FGSL…LLAM), 78 to 99 (WLIR…FLHI), 114 to 134 (WNTG…GYVL), and 179 to 199 (FFAL…IHLT). 2 residues coordinate heme b: His-84 and His-98. Residues His-183 and His-197 each contribute to the heme b site. An a ubiquinone-binding site is contributed by His-202. 4 helical membrane-spanning segments follow: residues 227-247 (LKDI…ALFS), 289-309 (LGGV…PFLH), 321-341 (LSQI…WIGS), and 348-368 (FIII…ILFP).

Belongs to the cytochrome b family. The cytochrome bc1 complex contains 11 subunits: 3 respiratory subunits (MT-CYB, CYC1 and UQCRFS1), 2 core proteins (UQCRC1 and UQCRC2) and 6 low-molecular weight proteins (UQCRH/QCR6, UQCRB/QCR7, UQCRQ/QCR8, UQCR10/QCR9, UQCR11/QCR10 and a cleavage product of UQCRFS1). This cytochrome bc1 complex then forms a dimer. Heme b serves as cofactor.

It localises to the mitochondrion inner membrane. In terms of biological role, component of the ubiquinol-cytochrome c reductase complex (complex III or cytochrome b-c1 complex) that is part of the mitochondrial respiratory chain. The b-c1 complex mediates electron transfer from ubiquinol to cytochrome c. Contributes to the generation of a proton gradient across the mitochondrial membrane that is then used for ATP synthesis. This Pavo muticus (Green peafowl) protein is Cytochrome b (MT-CYB).